A 251-amino-acid polypeptide reads, in one-letter code: Adenylate kinase (251 aa).

Residue 46–51 (GAGKGT) coordinates ATP. An NMP region spans residues 66–95 (ATGDMLRSQVQQQTPLGVEAKKIMDAGGLV). Residues Thr-67, Arg-72, 93–95 (GLV), 122–125 (GFPR), and Gln-129 contribute to the AMP site. The interval 163–200 (GRLVHPASGRSYHKVFNPPKKEMIDDITGEALVQRSDD) is LID. Residues Arg-164 and 173-174 (SY) each bind ATP. The AMP site is built by Arg-197 and Arg-208. An ATP-binding site is contributed by Gln-236.

This sequence belongs to the adenylate kinase family. AK2 subfamily. As to quaternary structure, monomer.

Its subcellular location is the cytoplasm. The protein localises to the cytosol. The protein resides in the mitochondrion intermembrane space. It carries out the reaction AMP + ATP = 2 ADP. In terms of biological role, catalyzes the reversible transfer of the terminal phosphate group between ATP and AMP. Plays an important role in cellular energy homeostasis and in adenine nucleotide metabolism. Adenylate kinase activity is critical for regulation of the phosphate utilization and the AMP de novo biosynthesis pathways. This chain is Adenylate kinase, found in Yarrowia lipolytica (strain CLIB 122 / E 150) (Yeast).